The chain runs to 210 residues: uncharacterized protein (210 aa).

Disordered regions lie at residues 1–21 and 168–210; these read MHRL…TDAI and EALQ…STAQ. A coiled-coil region spans residues 21 to 175; sequence IDSLDKRSDS…ELEALQQESS (155 aa). Polar residues predominate over residues 174–184; the sequence is SSWLGDQSTAE.

The protein belongs to the SNF7 family.

This is an uncharacterized protein from Schizosaccharomyces pombe (strain 972 / ATCC 24843) (Fission yeast).